The primary structure comprises 356 residues: Chorismate synthase (356 aa).

Positions 48 and 54 each coordinate NADP(+). FMN contacts are provided by residues 125–127 (RSS), 237–238 (NA), glycine 281, 296–300 (KPTSS), and arginine 322.

This sequence belongs to the chorismate synthase family. In terms of assembly, homotetramer. Requires FMNH2 as cofactor.

It catalyses the reaction 5-O-(1-carboxyvinyl)-3-phosphoshikimate = chorismate + phosphate. The protein operates within metabolic intermediate biosynthesis; chorismate biosynthesis; chorismate from D-erythrose 4-phosphate and phosphoenolpyruvate: step 7/7. In terms of biological role, catalyzes the anti-1,4-elimination of the C-3 phosphate and the C-6 proR hydrogen from 5-enolpyruvylshikimate-3-phosphate (EPSP) to yield chorismate, which is the branch point compound that serves as the starting substrate for the three terminal pathways of aromatic amino acid biosynthesis. This reaction introduces a second double bond into the aromatic ring system. This is Chorismate synthase from Novosphingobium aromaticivorans (strain ATCC 700278 / DSM 12444 / CCUG 56034 / CIP 105152 / NBRC 16084 / F199).